A 253-amino-acid polypeptide reads, in one-letter code: Toxin PezT (253 aa).

39 to 46 (GQSGAGKT) lines the ATP pocket. The active-site Proton acceptor is the Asp66.

This sequence belongs to the zeta toxin family. As to quaternary structure, forms a PezA(2)PezT(2) heterotetramer. The heterotetramer is much more stable than either of the proteins alone, and a specific mechanism may be necessary to liberate the toxin.

The enzyme catalyses UDP-N-acetyl-alpha-D-glucosamine + ATP = UDP-N-acetyl-alpha-D-glucosamine 3'-phosphate + ADP + H(+). Functionally, toxic component of a type II toxin-antitoxin (TA) system. Phosphorylates UDP-N-acetyl-D-glucosamine (UNAG) on the 3'-hydroxyl group of the N-acetyl-D-glucosamine moiety, yielding UNAG-3P. UNAG-3P inhibits MurA, the first committed step in cell wall synthesis, which is then blocked. Upon expression in E.coli results in decreased cell growth and viability, followed 3 hours later by growth restoration; the toxic effect and phosphorylation of UNAG are neutralized by coexpression with cognate antitoxin PezA. A mutant lacking the last 11 residues is stably maintained in E.coli, unlike the wild-type which undergoes spontaneous mutation. Expression of the deletion mutant in rapidly growing liquid cultures leads to cell bulging, permeabilization and massive lysis by 1 hour. Cells that survive are not able to undergo cytokinesis. Expression in slowly growing cells leads to bulging but not lysis. Its function is as follows. Acts as a corepressor of its own operon with PezA; it is not clear if it binds DNA alone. This is Toxin PezT (pezT) from Streptococcus pneumoniae serotype 4 (strain ATCC BAA-334 / TIGR4).